We begin with the raw amino-acid sequence, 1076 residues long: Enhancer of mRNA-decapping protein 4-like protein pdc1 (1076 aa).

Low complexity-rich tracts occupy residues 1–19 (MNEQDLLNSLRRDLNLPNL) and 53–69 (SSLLSLLNAGLNASNQS). 3 disordered regions span residues 1-82 (MNEQ…ASHS), 95-127 (GAKPSGTASGADVKRSDSESTEATSNERPFNPV), and 139-204 (STGP…AEEQ). The span at 70–82 (PSNSGPKYYASHS) shows a compositional bias: polar residues. Over residues 153 to 173 (NDSQDTAFQSSRNMPSDTSVA) the composition is skewed to polar residues. The segment covering 174–184 (SPDYSHSQSSS) has biased composition (low complexity). Polar residues predominate over residues 185–195 (PIANYQESGNS). WD repeat units lie at residues 292 to 334 (NSPN…STSE) and 402 to 441 (DTGISAKEYDFSYDGTVFATVDKDALIKIYTVPTTFPSTP). Disordered stretches follow at residues 666–714 (RHST…SPSS) and 892–934 (TAPD…PAQG). A compositionally biased stretch (polar residues) spans 669–688 (TASPSTVNSGFSTPRSQATG). Residues Ser-671 and Ser-673 each carry the phosphoserine modification. At Thr-674 the chain carries Phosphothreonine. Residues 695–706 (DKGERFETKDKS) show a composition bias toward basic and acidic residues. Residues 789-1076 (MQVALKEEIA…ISEISVASSN (288 aa)) form an interaction with dcp2 region. Ser-1075 carries the post-translational modification Phosphoserine.

It belongs to the WD repeat EDC4 family. Interacts with dcp2; via C-terminus.

Its subcellular location is the cytoplasm. The protein localises to the P-body. Its function is as follows. Involved in P-body formation. Acts as a functional homolog of human EDC4, which plays a role in mRNA decapping in the process of mRNA degradation. Enhances the decapping activity of dcp2. Together with edc3, acts as a scaffolding protein sufficient for the phase transition of the components of the 5' to 3' mRNA degradation machinery to form P-bodies. Intermolecular interactions between the edc3 Sm domain and at least 10 helical leucine-rich motifs in dcp2 and pdc1 build the core of the interaction network of this spontaneous clustering process. The sequence is that of Enhancer of mRNA-decapping protein 4-like protein pdc1 from Schizosaccharomyces pombe (strain 972 / ATCC 24843) (Fission yeast).